A 219-amino-acid polypeptide reads, in one-letter code: Phosphoribosylformylglycinamidine synthase subunit PurQ (219 aa).

A Glutamine amidotransferase type-1 domain is found at 2-219 (KIAVITFPGS…KVVLDLILGS (218 aa)). Cys86 acts as the Nucleophile in catalysis. Catalysis depends on residues His195 and Glu197.

As to quaternary structure, part of the FGAM synthase complex composed of 1 PurL, 1 PurQ and 2 PurS subunits.

Its subcellular location is the cytoplasm. The enzyme catalyses N(2)-formyl-N(1)-(5-phospho-beta-D-ribosyl)glycinamide + L-glutamine + ATP + H2O = 2-formamido-N(1)-(5-O-phospho-beta-D-ribosyl)acetamidine + L-glutamate + ADP + phosphate + H(+). It catalyses the reaction L-glutamine + H2O = L-glutamate + NH4(+). It functions in the pathway purine metabolism; IMP biosynthesis via de novo pathway; 5-amino-1-(5-phospho-D-ribosyl)imidazole from N(2)-formyl-N(1)-(5-phospho-D-ribosyl)glycinamide: step 1/2. Its function is as follows. Part of the phosphoribosylformylglycinamidine synthase complex involved in the purines biosynthetic pathway. Catalyzes the ATP-dependent conversion of formylglycinamide ribonucleotide (FGAR) and glutamine to yield formylglycinamidine ribonucleotide (FGAM) and glutamate. The FGAM synthase complex is composed of three subunits. PurQ produces an ammonia molecule by converting glutamine to glutamate. PurL transfers the ammonia molecule to FGAR to form FGAM in an ATP-dependent manner. PurS interacts with PurQ and PurL and is thought to assist in the transfer of the ammonia molecule from PurQ to PurL. The polypeptide is Phosphoribosylformylglycinamidine synthase subunit PurQ (Leptospira interrogans serogroup Icterohaemorrhagiae serovar copenhageni (strain Fiocruz L1-130)).